The primary structure comprises 66 residues: LAEQAERYEEMVEYMEKNLLSVAYKIISSIEQKEESRQAFDEAIAELDTLGEESYKDSTLIMQLLR.

The protein belongs to the 14-3-3 family.

This is 14-3-3-like protein 2 from Pseudotsuga menziesii (Douglas-fir).